The sequence spans 458 residues: ATP synthase subunit beta (458 aa).

An ATP-binding site is contributed by 148-155 (GGAGVGKT).

Belongs to the ATPase alpha/beta chains family. In terms of assembly, F-type ATPases have 2 components, CF(1) - the catalytic core - and CF(0) - the membrane proton channel. CF(1) has five subunits: alpha(3), beta(3), gamma(1), delta(1), epsilon(1). CF(0) has three main subunits: a(1), b(2) and c(9-12). The alpha and beta chains form an alternating ring which encloses part of the gamma chain. CF(1) is attached to CF(0) by a central stalk formed by the gamma and epsilon chains, while a peripheral stalk is formed by the delta and b chains.

It localises to the cell inner membrane. The enzyme catalyses ATP + H2O + 4 H(+)(in) = ADP + phosphate + 5 H(+)(out). Functionally, produces ATP from ADP in the presence of a proton gradient across the membrane. The catalytic sites are hosted primarily by the beta subunits. The polypeptide is ATP synthase subunit beta (Shewanella pealeana (strain ATCC 700345 / ANG-SQ1)).